We begin with the raw amino-acid sequence, 316 residues long: Transcription initiation factor IIB (316 aa).

A TFIIB-type zinc finger spans residues 11–42 (PRVTCPNHPDAILVEDYRAGDMICPECGLVVG). 4 residues coordinate Zn(2+): cysteine 15, histidine 18, cysteine 34, and cysteine 37. Residues serine 70, serine 76, and serine 92 each carry the phosphoserine modification. Repeat copies occupy residues 124 to 200 (MADR…LILK) and 218 to 294 (FCSN…LIYP). DNA contacts are provided by lysine 152, arginine 154, lysine 189, and lysine 196. The segment at 189–193 (KEIGR) is core promoter DNA-binding. Lysine 238 carries the N6-acetyllysine; by autocatalysis modification. Residues 244–316 (LVPGRSPISV…DTPVDKLPQL (73 aa)) form a necessary for TATA box-bound complex TBP formation region. Arginine 248 is a binding site for DNA. The core promoter DNA-binding stretch occupies residues 249–252 (SPIS). Residues lysine 272, alanine 281, threonine 284, arginine 286, and arginine 290 each contribute to the DNA site. Positions 283–286 (VTIR) are core promoter DNA-binding.

It belongs to the TFIIB family. In terms of assembly, found in a ternary complex with TATA box-bound TBP. Part of a TFIID-containing RNA polymerase II pre-initiation complex (PIC) that is composed of TBP and at least GTF2A1, GTF2A2, GTF2E1, GTF2E2, GTF2F1, GTF2H2, GTF2H3, GTF2H4, GTF2H5, GTF2B, TCEA1, ERCC2, ERCC3, TAF1, TAF2, TAF3, TAF4, TAF5, TAF6, TAF7, TAF8, TAF9, TAF10, TAF11, TAF12 and TAF13. Associates with TFIID-TFIIA (DA complex) to form TFIID-TFIIA-TFIIB (DAB complex), which is then recognized by RNA polymerase II (Pol II). Found in a RNA polymerase II initiation complex. Interacts (via C-terminus) with TBP; this interaction with TATA box-bound TBP guides Pol II into the PIC. Interacts (via N-terminus) with Pol II. Interacts (via C-terminus) with SSU72; this interaction is inhibited by SYMPK. Interacts with NR2F1; this interaction is direct. Interacts with PGR. Interacts with ESR1. Interacts with GTF2F1 (via C-terminus and preferentially via acetylated form); this interaction prevents binding of GTF2B to GTF2F2. Interacts with GTF2F2 (via N-terminus); this interaction is inhibited in presence of GTF2F1. Interacts with the transcription elongation factor TCEA2. Interacts with HSF1 (via transactivation domain). Interacts with GPBP1. Post-translationally, acetylated. Autoacetylated; autoacetylation at Lys-238 stimulates transcription activation.

The protein resides in the nucleus. It is found in the chromosome. It catalyses the reaction L-lysyl-[protein] + acetyl-CoA = N(6)-acetyl-L-lysyl-[protein] + CoA + H(+). In terms of biological role, general transcription factor that plays a role in transcription initiation by RNA polymerase II (Pol II). Involved in the pre-initiation complex (PIC) formation and Pol II recruitment at promoter DNA. Together with the TATA box-bound TBP forms the core initiation complex and provides a bridge between TBP and the Pol II-TFIIF complex. Released from the PIC early following the onset of transcription during the initiation and elongation transition and reassociates with TBP during the next transcription cycle. Associates with chromatin to core promoter-specific regions. Binds to two distinct DNA core promoter consensus sequence elements in a TBP-independent manner; these IIB-recognition elements (BREs) are localized immediately upstream (BREu), 5'-[GC][GC][GA]CGCC-3', and downstream (BREd), 5'-[GA]T[TGA][TG][GT][TG][TG]-3', of the TATA box element. Modulates transcription start site selection. Also exhibits autoacetyltransferase activity that contributes to the activated transcription. This Pongo abelii (Sumatran orangutan) protein is Transcription initiation factor IIB.